Reading from the N-terminus, the 251-residue chain is uncharacterized protein (251 aa).

Position 12 to 21 (12 to 21) interacts with NADP(+); it reads TGASSQGDIG. A substrate-binding site is contributed by S148. Y161 functions as the Proton acceptor in the catalytic mechanism.

The protein belongs to the short-chain dehydrogenases/reductases (SDR) family.

This is an uncharacterized protein from Bacillus subtilis (strain 168).